The sequence spans 155 residues: Small ribosomal subunit protein uS9 (155 aa).

Belongs to the universal ribosomal protein uS9 family.

This Rhizobium johnstonii (strain DSM 114642 / LMG 32736 / 3841) (Rhizobium leguminosarum bv. viciae) protein is Small ribosomal subunit protein uS9.